A 736-amino-acid chain; its full sequence is Glycogen [starch] synthase, muscle (736 aa).

Phosphoserine; by AMPK and PKA is present on Ser8. Ser11 is subject to Phosphoserine. UDP is bound at residue Lys39. Positions 205 and 211 each coordinate UDP-alpha-D-glucose. Positions 291, 292, 294, 297, and 301 each coordinate alpha-D-glucose 6-phosphate. Arg331 contributes to the UDP binding site. Arg331 contributes to the UDP-alpha-D-glucose binding site. Ser412 carries the post-translational modification Phosphoserine. Position 501 (His501) interacts with alpha-D-glucose 6-phosphate. UDP-alpha-D-glucose-binding residues include Glu510, Trp512, and Gly513. Thr515 contributes to the UDP binding site. Residues Arg582 and Arg586 each coordinate alpha-D-glucose 6-phosphate. A disordered region spans residues 631-736 (TQGYRYPRPA…PASSLGEERN (106 aa)). Ser641 is modified (phosphoserine; by DYRK2, GSK3-alpha, GSK3-beta and PASK). Phosphoserine; by GSK3-alpha and GSK3-beta occurs at positions 645 and 649. At Ser652 the chain carries Phosphoserine. Ser653 carries the phosphoserine; by GSK3-alpha and GSK3-beta modification. Phosphoserine; by CK2 is present on Ser657. Over residues 658-681 (EDEEEPRDLPPDEDDERYDEDEEA) the composition is skewed to acidic residues. Over residues 682 to 695 (AKDRRNIRAPEWPR) the composition is skewed to basic and acidic residues. Ser698 bears the Phosphoserine mark. Phosphothreonine is present on Thr700. Ser709 is subject to Phosphoserine. Over residues 714–727 (PSSSVSTPSEPLSP) the composition is skewed to low complexity. Thr720 carries the post-translational modification Phosphothreonine. A phosphoserine mark is found at Ser726 and Ser730.

Belongs to the glycosyltransferase 3 family. As to quaternary structure, part of the GYS1-GYG1 complex, a heterooctamer composed of a tetramer of GYS1 and 2 dimers of GYG1, where each GYS1 protomer binds to one GYG1 subunit (via GYG1 C-terminus); the GYS1 tetramer may dissociate from GYG1 dimers to continue glycogen polymerization on its own. Post-translationally, phosphorylation at Ser-8 by AMPK inactivates the enzyme activity. Primed phosphorylation at Ser-657 (site 5) by CSNK2A1 and CSNK2A2 is required for inhibitory phosphorylation at Ser-641 (site 3a), Ser-645 (site 3b), Ser-649 (site 3c) and Ser-653 (site 4) by GSK3A an GSK3B. Phosphorylated at Ser-641 by PASK, leading to inactivation; phosphorylation by PASK is inhibited by glycogen. Phosphorylated at Ser-641 by DYRK2, leading to inactivation. Dephosphorylation at Ser-641 and Ser-645 by PP1 activates the enzyme.

The enzyme catalyses [(1-&gt;4)-alpha-D-glucosyl](n) + UDP-alpha-D-glucose = [(1-&gt;4)-alpha-D-glucosyl](n+1) + UDP + H(+). Its pathway is glycan biosynthesis; glycogen biosynthesis. Its activity is regulated as follows. Allosteric activation by glucose-6-phosphate. Phosphorylation reduces the activity towards UDP-glucose. When in the non-phosphorylated state, glycogen synthase does not require glucose-6-phosphate as an allosteric activator; when phosphorylated it does. Its function is as follows. Glycogen synthase participates in the glycogen biosynthetic process along with glycogenin and glycogen branching enzyme. Extends the primer composed of a few glucose units formed by glycogenin by adding new glucose units to it. In this context, glycogen synthase transfers the glycosyl residue from UDP-Glc to the non-reducing end of alpha-1,4-glucan. This Bos taurus (Bovine) protein is Glycogen [starch] synthase, muscle (GYS1).